The sequence spans 552 residues: Serine palmitoyltransferase 3 (552 aa).

Residues 1 to 29 (MANPGGGAVCNGKLHNHKKQSNGSQSRNC) form a disordered region. Residues 59–79 (PLHVMVFTYMGYGIGTLFGYL) form a helical membrane-spanning segment. Lys371 carries the post-translational modification N6-(pyridoxal phosphate)lysine.

This sequence belongs to the class-II pyridoxal-phosphate-dependent aminotransferase family. In terms of assembly, component of the serine palmitoyltransferase (SPT) complex, which is composed of SPTLC1, SPTLC2 or SPTLC3 and SPTSSA or SPTSSB. The heterodimer consisting of SPTLC1 and SPTLC2/SPTLC3 forms the catalytic core of the enzyme, while SPTSSA or SPTSSB subunits determine substrate specificity. SPT also interacts with ORMDL proteins, especially ORMDL3, which negatively regulate SPT activity in the presence of ceramides. Pyridoxal 5'-phosphate is required as a cofactor. In terms of tissue distribution, expressed in most tissues, except peripheral blood cells and bone marrow, with highest levels in heart, kidney, liver, uterus and skin.

It is found in the endoplasmic reticulum membrane. The enzyme catalyses L-serine + hexadecanoyl-CoA + H(+) = 3-oxosphinganine + CO2 + CoA. It carries out the reaction dodecanoyl-CoA + L-serine + H(+) = 3-oxotetradecasphinganine + CO2 + CoA. It catalyses the reaction tetradecanoyl-CoA + L-serine + H(+) = 3-oxohexadecasphinganine + CO2 + CoA. The catalysed reaction is octadecanoyl-CoA + L-serine + H(+) = 3-oxoeicosasphinganine + CO2 + CoA. It participates in lipid metabolism; sphingolipid metabolism. With respect to regulation, SPT complex catalytic activity is negatively regulated by ORMDL proteins, including ORMDL3, in the presence of ceramides. This mechanism allows to maintain ceramide levels at sufficient concentrations for the production of complex sphingolipids, but which prevents the accumulation of ceramides to levels that trigger apoptosis. Component of the serine palmitoyltransferase multisubunit enzyme (SPT) that catalyzes the initial and rate-limiting step in sphingolipid biosynthesis by condensing L-serine and activated acyl-CoA (most commonly palmitoyl-CoA) to form long-chain bases. The SPT complex is composed of SPTLC1, SPTLC2 or SPTLC3 and SPTSSA or SPTSSB. Within this complex, the heterodimer consisting of SPTLC1 and SPTLC2/SPTLC3 forms the catalytic core. The composition of the serine palmitoyltransferase (SPT) complex determines the substrate preference. The SPTLC1-SPTLC2-SPTSSA complex shows a strong preference for C16-CoA substrate, while the SPTLC1-SPTLC3-SPTSSA isozyme uses both C14-CoA and C16-CoA as substrates, with a slight preference for C14-CoA. The SPTLC1-SPTLC2-SPTSSB complex shows a strong preference for C18-CoA substrate, while the SPTLC1-SPTLC3-SPTSSB isozyme displays an ability to use a broader range of acyl-CoAs, without apparent preference. In Homo sapiens (Human), this protein is Serine palmitoyltransferase 3.